Reading from the N-terminus, the 209-residue chain is Tumor suppressor candidate gene 1 protein (209 aa).

Disordered regions lie at residues 1 to 55 (MWRM…DGAR), 111 to 157 (ALRL…LRAR), and 172 to 209 (LHLEQRGPRPSGDKEEQPLQEPDSGLRSRDSEPSGPWL). Positions 14–47 (CCGGDGAADGRGPGRSGRARGGGSPSGGGGGVGW) are enriched in gly residues. Residues 70-114 (LEAIRARDEWDRQNARLRQENARLRLENRRLKRENRSLFRQALRL) adopt a coiled-coil conformation. The segment covering 125-149 (EARRVPEEASTNRRARDSGREDEPG) has biased composition (basic and acidic residues). Ser-150 bears the Phosphoserine mark. The stretch at 152 to 177 (RALRARLEKLEAMYRRALLQLHLEQR) forms a coiled coil. The segment covering 174-188 (LEQRGPRPSGDKEEQ) has biased composition (basic and acidic residues).

In terms of tissue distribution, widely expressed at low level. Expressed at higher level in testis, weakly expressed in muscle, colon, lung and spleen. Not detected in 3 non small cell lung carcinoma (NSCLC) cell lines with homozygous deletion of the 9p region, while it is down-regulated in 3 other tumor cell lines.

In Homo sapiens (Human), this protein is Tumor suppressor candidate gene 1 protein (TUSC1).